The primary structure comprises 658 residues: Pro-secreted protein ORF2 (658 aa).

Positions 1-19 are cleaved as a signal peptide; the sequence is MRSRALLFLLFVLLPMLPA. The tract at residues 62–124 is disordered; that stretch reads SDIPAAAGTG…PDTAPVPDAD (63 aa). The segment covering 91 to 122 has biased composition (low complexity); sequence RPAASTRRRPAPAGASPLTAVAPAPDTAPVPD. Residues N135 and N308 are each glycosylated (N-linked (GlcNAc...) asparagine; by host). The segment at 366–392 is particle formation; sequence IALTLFNLADTLLGGLPTELISSAGGQ. An N-linked (GlcNAc...) asparagine; by host glycan is attached at N560. Positions 583–608 are oligomerization; that stretch reads TTNLGSGPVSVSAVGVLAPHSALAAL.

This sequence belongs to the hepevirus capsid protein family. As to quaternary structure, homodimer. Self-assembles to form the capsid. The capsid is dominated by dimers that define the 30 morphological units. Interacts with phosphorylated protein ORF3. Interacts with host TMEM134. Interacts with host ASGR1 and ASGR2; these interactions facilitate infection of host hepatocytes. In terms of processing, cleaved by host protease in the N-terminus. Post-translationally, N-glycosylated. Not N-glycosylated. The C-terminus of the capsid protein ORF2 is truncated in non-enveloped virions shedded in feces, probably due to host proteases.

The protein localises to the secreted. It is found in the virion. It localises to the host cytoplasm. The protein resides in the host endoplasmic reticulum. Its subcellular location is the host Golgi apparatus. The protein localises to the host cell surface. It is found in the host nucleus. Functionally, plays a role in the inhibition of host antibody-mediated neutralization without blocking viral cell entry. In terms of biological role, forms an icosahedral capsid with a T=1 symmetry and a 34 nm diameter. The capsid is composed of 60 copies linked to each other. Binds to the 5' end of the genomic RNA to mediate genome encapsidation. Binds to heparin surface proteoglycans (HSPGs) to mediate viral entry. Additionally, the interactions with host ASGR1 and ASGR2 facilitate viral infection of hepatocytes. Inhibits IFN production by blocking host TBK1-induced IRF3 phosphorylation. The nuclear form probably modulates host gene expression. This Bandicota bengalensis (lesser bandicoot rat) protein is Pro-secreted protein ORF2.